The primary structure comprises 351 residues: Protein-glutamate methylesterase/protein-glutamine glutaminase 2 (351 aa).

Residues 4-121 (KVLVVDDSAL…PQDFNEYQDL (118 aa)) enclose the Response regulatory domain. 4-aspartylphosphate is present on Asp55. One can recognise a CheB-type methylesterase domain in the interval 156–348 (RVINTQLVAI…DKMLNYLASL (193 aa)). Catalysis depends on residues Ser168, His194, and Asp290.

It belongs to the CheB family. Post-translationally, phosphorylated by CheA. Phosphorylation of the N-terminal regulatory domain activates the methylesterase activity.

It localises to the cytoplasm. It carries out the reaction [protein]-L-glutamate 5-O-methyl ester + H2O = L-glutamyl-[protein] + methanol + H(+). The enzyme catalyses L-glutaminyl-[protein] + H2O = L-glutamyl-[protein] + NH4(+). Functionally, involved in chemotaxis. Part of a chemotaxis signal transduction system that modulates chemotaxis in response to various stimuli. Catalyzes the demethylation of specific methylglutamate residues introduced into the chemoreceptors (methyl-accepting chemotaxis proteins or MCP) by CheR. Also mediates the irreversible deamidation of specific glutamine residues to glutamic acid. The protein is Protein-glutamate methylesterase/protein-glutamine glutaminase 2 of Shewanella sp. (strain MR-4).